Reading from the N-terminus, the 293-residue chain is Undecaprenyl-diphosphatase (293 aa).

6 helical membrane passes run 74-94 (VLVFFAKEIWQIITGWFAGVF), 107-127 (WMIIVATIPVVILGVLGKDLI), 134-154 (MWITASVLILFSLVFILAEKM), 209-229 (FLLAIPAVLGSGLYSLPDAFA), 243-263 (VGTLVAFVVGYISIAWLMKFV), and 271-291 (FAAYRIPAGLLVMLLLALGML).

It belongs to the UppP family.

The protein resides in the cell membrane. It carries out the reaction di-trans,octa-cis-undecaprenyl diphosphate + H2O = di-trans,octa-cis-undecaprenyl phosphate + phosphate + H(+). Its function is as follows. Catalyzes the dephosphorylation of undecaprenyl diphosphate (UPP). Confers resistance to bacitracin. The polypeptide is Undecaprenyl-diphosphatase (Corynebacterium glutamicum (strain ATCC 13032 / DSM 20300 / JCM 1318 / BCRC 11384 / CCUG 27702 / LMG 3730 / NBRC 12168 / NCIMB 10025 / NRRL B-2784 / 534)).